Reading from the N-terminus, the 147-residue chain is Large ribosomal subunit protein uL13 (147 aa).

Belongs to the universal ribosomal protein uL13 family. In terms of assembly, part of the 50S ribosomal subunit.

This protein is one of the early assembly proteins of the 50S ribosomal subunit, although it is not seen to bind rRNA by itself. It is important during the early stages of 50S assembly. In Lactobacillus johnsonii (strain CNCM I-12250 / La1 / NCC 533), this protein is Large ribosomal subunit protein uL13.